Here is a 356-residue protein sequence, read N- to C-terminus: 4-hydroxy-3-methylbut-2-en-1-yl diphosphate synthase (flavodoxin) (356 aa).

Positions 262, 265, 297, and 304 each coordinate [4Fe-4S] cluster.

This sequence belongs to the IspG family. Requires [4Fe-4S] cluster as cofactor.

The catalysed reaction is (2E)-4-hydroxy-3-methylbut-2-enyl diphosphate + oxidized [flavodoxin] + H2O + 2 H(+) = 2-C-methyl-D-erythritol 2,4-cyclic diphosphate + reduced [flavodoxin]. Its pathway is isoprenoid biosynthesis; isopentenyl diphosphate biosynthesis via DXP pathway; isopentenyl diphosphate from 1-deoxy-D-xylulose 5-phosphate: step 5/6. In terms of biological role, converts 2C-methyl-D-erythritol 2,4-cyclodiphosphate (ME-2,4cPP) into 1-hydroxy-2-methyl-2-(E)-butenyl 4-diphosphate. The protein is 4-hydroxy-3-methylbut-2-en-1-yl diphosphate synthase (flavodoxin) of Campylobacter fetus subsp. fetus (strain 82-40).